The chain runs to 96 residues: Co-chaperonin GroES (96 aa).

This sequence belongs to the GroES chaperonin family. Heptamer of 7 subunits arranged in a ring. Interacts with the chaperonin GroEL.

The protein localises to the cytoplasm. Its function is as follows. Together with the chaperonin GroEL, plays an essential role in assisting protein folding. The GroEL-GroES system forms a nano-cage that allows encapsulation of the non-native substrate proteins and provides a physical environment optimized to promote and accelerate protein folding. GroES binds to the apical surface of the GroEL ring, thereby capping the opening of the GroEL channel. This Aromatoleum aromaticum (strain DSM 19018 / LMG 30748 / EbN1) (Azoarcus sp. (strain EbN1)) protein is Co-chaperonin GroES.